A 71-amino-acid chain; its full sequence is Small ribosomal subunit protein bS21 (71 aa).

The protein belongs to the bacterial ribosomal protein bS21 family.

This is Small ribosomal subunit protein bS21 from Hydrogenovibrio crunogenus (strain DSM 25203 / XCL-2) (Thiomicrospira crunogena).